A 788-amino-acid chain; its full sequence is 5-methyltetrahydropteroyltriglutamate--homocysteine methyltransferase (788 aa).

5-methyltetrahydropteroyltri-L-glutamate contacts are provided by residues 24–27 and lysine 140; that span reads RELK. L-homocysteine contacts are provided by residues 463-465 and glutamate 516; that span reads IGS. L-methionine-binding positions include 463–465 and glutamate 516; that span reads IGS. 5-methyltetrahydropteroyltri-L-glutamate contacts are provided by residues 547–548 and tryptophan 593; that span reads RC. Aspartate 631 is an L-homocysteine binding site. L-methionine is bound at residue aspartate 631. Residue glutamate 637 participates in 5-methyltetrahydropteroyltri-L-glutamate binding. Residues histidine 673, cysteine 675, and glutamate 697 each coordinate Zn(2+). Catalysis depends on histidine 726, which acts as the Proton donor. Zn(2+) is bound at residue cysteine 758.

This sequence belongs to the vitamin-B12 independent methionine synthase family. Requires Zn(2+) as cofactor.

It carries out the reaction 5-methyltetrahydropteroyltri-L-glutamate + L-homocysteine = tetrahydropteroyltri-L-glutamate + L-methionine. It functions in the pathway amino-acid biosynthesis; L-methionine biosynthesis via de novo pathway; L-methionine from L-homocysteine (MetE route): step 1/1. In terms of biological role, catalyzes the transfer of a methyl group from 5-methyltetrahydrofolate to homocysteine resulting in methionine formation. This is 5-methyltetrahydropteroyltriglutamate--homocysteine methyltransferase from Rhodopseudomonas palustris (strain TIE-1).